The primary structure comprises 216 residues: Peptide methionine sulfoxide reductase MsrA (216 aa).

The active site involves C54.

This sequence belongs to the MsrA Met sulfoxide reductase family.

It catalyses the reaction L-methionyl-[protein] + [thioredoxin]-disulfide + H2O = L-methionyl-(S)-S-oxide-[protein] + [thioredoxin]-dithiol. The enzyme catalyses [thioredoxin]-disulfide + L-methionine + H2O = L-methionine (S)-S-oxide + [thioredoxin]-dithiol. In terms of biological role, has an important function as a repair enzyme for proteins that have been inactivated by oxidation. Catalyzes the reversible oxidation-reduction of methionine sulfoxide in proteins to methionine. The polypeptide is Peptide methionine sulfoxide reductase MsrA (Xanthomonas campestris pv. phaseoli).